A 677-amino-acid chain; its full sequence is Fermitin family homolog 1 (677 aa).

In terms of domain architecture, FERM spans 96–653 (MLRLRLPNLK…HEYIGGYIFL (558 aa)). Residues serine 170, serine 179, and serine 361 each carry the phosphoserine modification. The region spanning 337–433 (ESEVDEIEAA…EVVPNVNVAE (97 aa)) is the PH domain.

The protein belongs to the kindlin family. Interacts with the cytoplasmic domain of integrins ITGB1 and ITGB3.

Its subcellular location is the cytoplasm. It localises to the cytoskeleton. The protein localises to the cell junction. It is found in the focal adhesion. The protein resides in the cell projection. Its subcellular location is the ruffle membrane. Involved in cell adhesion. Contributes to integrin activation. When coexpressed with talin, potentiates activation of ITGA2B. Required for normal keratinocyte proliferation. Required for normal polarization of basal keratinocytes in skin, and for normal cell shape. Required for normal adhesion of keratinocytes to fibronectin and laminin, and for normal keratinocyte migration to wound sites. The protein is Fermitin family homolog 1 (FERMT1) of Pongo abelii (Sumatran orangutan).